The primary structure comprises 407 residues: Semenogelin-2 (407 aa).

The N-terminal stretch at 1 to 23 is a signal peptide; that stretch reads MKSIILFVLSLVLILEKQAAVMG. Disordered stretches follow at residues 25–60, 133–158, 173–192, and 272–407; these read KDGS…TKSK, GQAH…LSSQ, KEQA…GSQS, and NLNQ…NKIS. Polar residues-rich tracts occupy residues 31-40, 137-158, and 174-192; these read QLPSGSSQFP, CGTQ…LSSQ, and EQAS…GSQS. Residues 292–310 show a composition bias toward basic and acidic residues; that stretch reads RTEERQLNHGEKSVQKDVS. The span at 325 to 334 shows a compositional bias: polar residues; the sequence is KSQNQVTIHS. Residues 335–345 show a composition bias toward basic and acidic residues; the sequence is QDQEHGHKENK. The span at 372-397 shows a compositional bias: polar residues; the sequence is GSISIQTEEQIHGKSQNXVRIPSQAQ.

The protein belongs to the semenogelin family. As to quaternary structure, interacts with SERPINA5.

Its subcellular location is the secreted. In terms of biological role, participates in the formation of a gel matrix (sperm coagulum) entrapping the accessory gland secretions and ejaculated spermatozoa. This is Semenogelin-2 (SEMG2) from Pan troglodytes (Chimpanzee).